Here is a 710-residue protein sequence, read N- to C-terminus: Early transcription factor 82 kDa subunit (710 aa).

The protein belongs to the poxviridae VETF large subunit family. In terms of assembly, heterodimer of a 70 kDa and a 82 kDa subunit. Part of the early transcription complex composed of ETF, RAP94/OPG109, and the DNA-directed RNA polymerase.

It is found in the virion. In terms of biological role, acts with RNA polymerase to initiate transcription from early gene promoters. Is recruited by the RPO-associated protein of 94 kDa RAP94/OPG109 to form the early transcription complex, which also contains the core RNA polymerase. ETF heterodimer binds to early gene promoters. The sequence is that of Early transcription factor 82 kDa subunit (OPG133) from Homo sapiens (Human).